Reading from the N-terminus, the 1171-residue chain is MSTVTFFNPYLCGPRKPRAPSAGEGGAEGAAAARARAASAPFLQIVPRGCLYDGERGLLKHNCALAPRMFFRDRPYVLSKDLVWPTLPPPAVPASTTERAPRAPAPSADLLFHMYDQAETVVSADSKELIHPGYRHRITPCGVVLRLFGRTADGASLCVNVFGQDAYFYCRYGDAQSLHDRLYRLSDTLELAPVFHVRVRRVQRCSIYGYGTRPFADLYLVACGNWHVLKKMGQCLLDEGVEVFEVGVSPLTRFLLDKKIPSFGWCRLRRWHARPAHGRLSTAELEVDCEVADVRGVDDVAWPLYRCLSFDIECLSGGGAFPVAENLDDVVIQISCVCYPVGGTEEQRAAFPVAERHLFTLGPCAPIPGVLVYEFPSEFELLCGFFTFFGRYAPEFVTGYNINNFDWRYLLTRAERVYRWPVAEYTRLRFGGRFCAYVPGGGGRQPGFRTAQTKVLITGTVVLDLYPVCMAKVSAPDYKLNTVCELYLGRQKEDLSYKELPRAFLSGDAGRARVGRYCVQDAVLVKELFEKLNYHYEAAAVARLARISLRKVIFEGQQIRIYTCLLEEAAARQMVVPTFRSGAQRGAATGAGGGGGEETTYQGATVFEPTVGYHHAPVAVFDFASLYPSIIMAHNLCYSTWLRDDPGTPARPPETPARPPETPAAGPSGAAHAGGVPGATFRTPFRTPAGVPAAAAGGVGAGPPGGGAVSSASVGGRAAVSPSETPAEREPEPAPEDVFVVHVGQGVSYRFVRENVRASILSELLRRWLAQRRAVREAMRECEDETRRLLLDKEQLALKVTCNAFYGFTGFSQGMLPCLPVAASITTIGRDMLSRTSAYIEAHFAEPAFLARFFEPGDLPRADEPPPTVRVIYGDTDSVFVRFGGVRAGAIVARGEDLAAAVTEALFTEPVKLEFEKLFVALMMICKKRYIGRVFGSDALVMKGVDLVRKTACRFVKTVVRDVVELVFRDAAVAEAATRMSELTLEEMRRVGVPAGFHVLLQRLARARDDLFSGRVETAALVLSSVLSQDVSRYKQLNLPHLAVIRRLAARSEELPSVGDRVSYVLTAGPPDGRANAPNYELAEDPDYVAAHRVPIHAAKYFEQVVKAVTNTLYPVFPRGVVRRDRFLADLVPKRVYLGDEFKRHARPVEEEVCESERGGSGLLSSLDSSR.

Disordered regions lie at residues 647 to 687 (GTPA…PFRT), 704 to 735 (PGGGAVSSASVGGRAAVSPSETPAEREPEPAP), and 1149 to 1171 (VEEEVCESERGGSGLLSSLDSSR). Residues 649-662 (PARPPETPARPPET) are compositionally biased toward pro residues. Low complexity-rich tracts occupy residues 663-674 (PAAGPSGAAHAG) and 709-725 (VSSASVGGRAAVSPSET). Residues 1149–1158 (VEEEVCESER) show a composition bias toward basic and acidic residues.

The protein belongs to the DNA polymerase type-B family.

The protein resides in the host nucleus. The enzyme catalyses DNA(n) + a 2'-deoxyribonucleoside 5'-triphosphate = DNA(n+1) + diphosphate. In Tupaia belangeri (Common tree shrew), this protein is DNA polymerase catalytic subunit (DPOL).